Here is a 367-residue protein sequence, read N- to C-terminus: 2-aminoethylphosphonate--pyruvate transaminase (367 aa).

N6-(pyridoxal phosphate)lysine is present on K193.

The protein belongs to the class-V pyridoxal-phosphate-dependent aminotransferase family. PhnW subfamily. Homodimer. Requires pyridoxal 5'-phosphate as cofactor.

It carries out the reaction (2-aminoethyl)phosphonate + pyruvate = phosphonoacetaldehyde + L-alanine. In terms of biological role, involved in phosphonate degradation. This Vibrio vulnificus (strain YJ016) protein is 2-aminoethylphosphonate--pyruvate transaminase.